We begin with the raw amino-acid sequence, 126 residues long: DNA-directed RNA polymerase I subunit RPA12 (126 aa).

Residues Cys-20, Cys-23, Cys-38, Cys-41, Cys-87, and Cys-90 each coordinate Zn(2+). The segment at 20–41 adopts a C4-type zinc-finger fold; it reads CSDCGSVLPLPGAQDTVTCTRC. A TFIIS-type zinc finger spans residues 83 to 123; that stretch reads VDRRCPRCGHEGMAYHTRQMRSADEGQTVFYTCTNCKFQEK. Residues 106 to 107 carry the Hairpin motif; that stretch reads DE. Zn(2+) contacts are provided by Cys-115 and Cys-118.

It belongs to the archaeal RpoM/eukaryotic RPA12/RPB9/RPC11 RNA polymerase family. In terms of assembly, component of the RNA polymerase I (Pol I) complex consisting of 13 subunits: a ten-subunit catalytic core composed of POLR1A/RPA1, POLR1B/RPA2, POLR1C/RPAC1, POLR1D/RPAC2, POLR1H/RPA12, POLR2E/RPABC1, POLR2F/RPABC2, POLR2H/RPABC3, POLR2K/RPABC4 and POLR2L/RPABC5; a mobile stalk subunit POLR1F/RPA43 protruding from the core and additional subunits homologous to general transcription factors POLR1E/RPA49 and POLR1G/RPA34. Part of Pol I pre-initiation complex (PIC), in which Pol I core assembles with RRN3 and promoter-bound UTBF and SL1/TIF-IB complex.

It is found in the nucleus. The protein localises to the nucleolus. Its function is as follows. Core component of RNA polymerase I (Pol I), a DNA-dependent RNA polymerase which synthesizes ribosomal RNA precursors using the four ribonucleoside triphosphates as substrates. Can mediate Pol I proofreading of the nascent RNA transcript. Anchors into the Pol I active site to monitor transcription fidelity and cleave mis-incorporated 5'-ribonucleotides. This chain is DNA-directed RNA polymerase I subunit RPA12, found in Macaca mulatta (Rhesus macaque).